The sequence spans 1359 residues: NPC1-like intracellular cholesterol transporter 1 (1359 aa).

The signal sequence occupies residues 1–21 (MAEAGLRGWLLWALLLRLAQS). The Extracellular portion of the chain corresponds to 22-284 (EPYTTIHQPG…TFYLGQMPGS (263 aa)). Cystine bridges form between cysteine 33/cysteine 90, cysteine 39/cysteine 57, cysteine 78/cysteine 125, cysteine 91/cysteine 129, cysteine 113/cysteine 254, cysteine 116/cysteine 172, cysteine 189/cysteine 197, cysteine 243/cysteine 259, and cysteine 256/cysteine 263. Asparagine 54 carries N-linked (GlcNAc...) asparagine glycosylation. Asparagine 132 and asparagine 138 each carry an N-linked (GlcNAc...) asparagine glycan. N-linked (GlcNAc...) asparagine glycosylation occurs at asparagine 244. A helical membrane pass occupies residues 285–305 (LVLIIILCSVFAVVTILLVGF). Over 306–351 (RVAPARDKSKMVDPKKGTSLSDKLSFSTHTLLGQFFQGWGTWVASW) the chain is Cytoplasmic. A helical membrane pass occupies residues 352–372 (PLTILVLSVIPVVALAAGLVF). Topologically, residues 373–632 (TELTTDPVEL…DEINRTTAED (260 aa)) are extracellular. N-linked (GlcNAc...) asparagine glycosylation is found at asparagine 416, asparagine 431, asparagine 464, asparagine 479, asparagine 497, and asparagine 506. A disulfide bridge connects residues cysteine 471 and cysteine 485. A disulfide bond links cysteine 525 and cysteine 542. Asparagine 626 is a glycosylation site (N-linked (GlcNAc...) asparagine). Positions 632–797 (DLPIFATSYI…MSAFVALLSL (166 aa)) constitute an SSD domain. The helical transmembrane segment at 633–653 (LPIFATSYIVIFLYISLALGS) threads the bilayer. Residues 654 to 666 (YSSWSRVMVDSKA) are Cytoplasmic-facing. Residues 667–687 (TLGLGGVAVVLGAVMAAMGFF) traverse the membrane as a helical segment. The Extracellular portion of the chain corresponds to 688–696 (SYLGIRSSL). Residues 697–717 (VILQVVPFLVLSVGADNIFIF) form a helical membrane-spanning segment. At 718 to 742 (VLEYQRLPRRPGEPREVHIGRALGR) the chain is on the cytoplasmic side. Residues 743 to 763 (VAPSMLLCSLSEAICFFLGAL) form a helical membrane-spanning segment. Topologically, residues 764–776 (TPMPAVRTFALTS) are extracellular. Residues 777–797 (GLAVILDFLLQMSAFVALLSL) form a helical membrane-spanning segment. Over 798-846 (DSKRQEASRLDVCCCVKPQELPPPGQGEGLLLGFFQKAYAPFLLHWITR) the chain is Cytoplasmic. A helical membrane pass occupies residues 847–867 (GVVLLLFLALFGVSLYSMCHI). Residues 868–1139 (SVGLDQELAL…EQYLTILPEG (272 aa)) lie on the Extracellular side of the membrane. Disulfide bonds link cysteine 920–cysteine 925, cysteine 966–cysteine 1024, and cysteine 980–cysteine 989. A helical transmembrane segment spans residues 1140–1160 (LFMLSLCLVPTFAVSCLLLGL). Residues 1161–1168 (DLRSGLLN) lie on the Cytoplasmic side of the membrane. Residues 1169–1189 (LLSIVMILVDTVGFMALWGIS) traverse the membrane as a helical segment. The Extracellular portion of the chain corresponds to 1190-1191 (YN). A helical membrane pass occupies residues 1192-1212 (AVSLINLVSAVGMSVEFVSHI). The Cytoplasmic segment spans residues 1213-1236 (TRSFAISTKPTWLERAKEATISMG). The chain crosses the membrane as a helical span at residues 1237-1257 (SAVFAGVAMTNLPGILVLGLA). Residues 1258-1268 (KAQLIQIFFFR) are Extracellular-facing. A helical transmembrane segment spans residues 1269-1289 (LNLLITLLGLLHGLVFLPVIL). Residues 1290–1359 (SYVGPDVNPA…NFLPNNGRQF (70 aa)) lie on the Cytoplasmic side of the membrane.

The protein belongs to the patched family. In terms of assembly, interacts with RAB11A, MYO5B and RAB11FIP2. Interaction with RAB11A, MYO5B and RAB11FIP2 is required for proper transport to the plasma membrane upon cholesterol depletion. Interacts with NPC2. Interacts with LIMA1. In terms of processing, highly glycosylated. Widely expressed. Expressed in liver. Also expressed in small intestine, pancreas, kidney, lung, pancreas, spleen, heart, gall bladder, brain, testis, stomach and muscle.

The protein resides in the apical cell membrane. The protein localises to the cell membrane. It is found in the cytoplasmic vesicle membrane. It catalyses the reaction cholesterol(in) = cholesterol(out). The enzyme catalyses sitosterol(out) = sitosterol(in). Functionally, plays a major role in cholesterol homeostasis. Critical for the uptake of cholesterol across the plasma membrane of the intestinal enterocyte. Involved in plant sterol absorption, it transports sitosterol, although at lower rates than cholesterol. Is the direct molecular target of ezetimibe, a drug that inhibits cholesterol absorption and is approved for the treatment of hypercholesterolemia. May have a function in the transport of multiple lipids and their homeostasis, thereby influencing lipid metabolism regulation. May be involved in caveolin trafficking from the plasma membrane. In addition, acts as a negative regulator of NPC2 and down-regulates its expression and secretion by inhibiting its maturation and accelerating its degradation. The protein is NPC1-like intracellular cholesterol transporter 1 of Homo sapiens (Human).